The chain runs to 182 residues: Putative adenylate kinase (182 aa).

G10, G12, K13, T14, and S15 together coordinate ATP. The NMP stretch occupies residues 30–53 (HLNEMIKEEHLYTEVDEVRDAVIA). The segment at 104-114 (ARGYSEEKIRE) is LID. ATP contacts are provided by R105 and K143.

The protein belongs to the adenylate kinase family. AK6 subfamily. As to quaternary structure, interacts with uS11. Not a structural component of 40S pre-ribosomes, but transiently interacts with them by binding to uS11.

The catalysed reaction is AMP + ATP = 2 ADP. It catalyses the reaction ATP + H2O = ADP + phosphate + H(+). Its function is as follows. Broad-specificity nucleoside monophosphate (NMP) kinase that catalyzes the reversible transfer of the terminal phosphate group between nucleoside triphosphates and monophosphates. Also has ATPase activity. Involved in the late maturation steps of the 30S ribosomal particles, specifically 16S rRNA maturation. While NMP activity is not required for ribosome maturation, ATPase activity is. Associates transiently with small ribosomal subunit protein uS11. ATP hydrolysis breaks the interaction with uS11. May temporarily remove uS11 from the ribosome to enable a conformational change of the ribosomal RNA that is needed for the final maturation step of the small ribosomal subunit. The polypeptide is Putative adenylate kinase (Methanosarcina barkeri (strain Fusaro / DSM 804)).